Reading from the N-terminus, the 357-residue chain is Probable cinnamyl alcohol dehydrogenase 2 (357 aa).

A Zn(2+)-binding site is contributed by Cys-47. Ser-49 lines the NADP(+) pocket. Zn(2+)-binding residues include His-69, Glu-70, Cys-100, Cys-103, Cys-106, Cys-114, and Cys-163. Residues Thr-167, 188-193 (GLGGVG), 211-216 (SSSDKK), Thr-251, Gly-275, and 298-300 (SFI) contribute to the NADP(+) site.

It belongs to the zinc-containing alcohol dehydrogenase family. As to quaternary structure, homodimer. Requires Zn(2+) as cofactor.

The enzyme catalyses (E)-cinnamyl alcohol + NADP(+) = (E)-cinnamaldehyde + NADPH + H(+). The catalysed reaction is (E)-coniferol + NADP(+) = (E)-coniferaldehyde + NADPH + H(+). It carries out the reaction (E)-sinapyl alcohol + NADP(+) = (E)-sinapaldehyde + NADPH + H(+). It catalyses the reaction (E)-4-coumaroyl alcohol + NADP(+) = (E)-4-coumaraldehyde + NADPH + H(+). The enzyme catalyses (E)-caffeyl alcohol + NADP(+) = (E)-caffeyl aldehyde + NADPH + H(+). Its pathway is aromatic compound metabolism; phenylpropanoid biosynthesis. Functionally, involved in lignin biosynthesis. Catalyzes the final step specific for the production of lignin monomers. Catalyzes the NADPH-dependent reduction of coniferaldehyde, 5-hydroxyconiferaldehyde, sinapaldehyde, 4-coumaraldehyde and caffeyl aldehyde to their respective alcohols. The sequence is that of Probable cinnamyl alcohol dehydrogenase 2 (CAD2) from Picea abies (Norway spruce).